The primary structure comprises 380 residues: Glucose-1-phosphate adenylyltransferase (380 aa).

Alpha-D-glucose 1-phosphate is bound by residues glycine 164, 179–180, and serine 190; that span reads EK.

Belongs to the bacterial/plant glucose-1-phosphate adenylyltransferase family. In terms of assembly, homotetramer.

The enzyme catalyses alpha-D-glucose 1-phosphate + ATP + H(+) = ADP-alpha-D-glucose + diphosphate. Its pathway is glycan biosynthesis; glycogen biosynthesis. Its function is as follows. Involved in the biosynthesis of ADP-glucose, a building block required for the elongation reactions to produce glycogen. Catalyzes the reaction between ATP and alpha-D-glucose 1-phosphate (G1P) to produce pyrophosphate and ADP-Glc. This Streptococcus pneumoniae (strain 70585) protein is Glucose-1-phosphate adenylyltransferase.